A 69-amino-acid chain; its full sequence is uncharacterized protein (69 aa).

As to quaternary structure, interacts with the RNA polymerase core.

This is an uncharacterized protein from Bacillus subtilis (strain 168).